The following is a 41-amino-acid chain: Photosystem II reaction center protein L (41 aa).

Residues S20–L40 form a helical membrane-spanning segment.

This sequence belongs to the PsbL family. PSII is composed of 1 copy each of membrane proteins PsbA, PsbB, PsbC, PsbD, PsbE, PsbF, PsbH, PsbI, PsbJ, PsbK, PsbL, PsbM, PsbT, PsbX, PsbY, PsbZ, Psb30/Ycf12, peripheral proteins PsbO, CyanoQ (PsbQ), PsbU, PsbV and a large number of cofactors. It forms dimeric complexes.

Its subcellular location is the cellular thylakoid membrane. Functionally, one of the components of the core complex of photosystem II (PSII). PSII is a light-driven water:plastoquinone oxidoreductase that uses light energy to abstract electrons from H(2)O, generating O(2) and a proton gradient subsequently used for ATP formation. It consists of a core antenna complex that captures photons, and an electron transfer chain that converts photonic excitation into a charge separation. This subunit is found at the monomer-monomer interface and is required for correct PSII assembly and/or dimerization. The protein is Photosystem II reaction center protein L of Synechococcus sp. (strain JA-3-3Ab) (Cyanobacteria bacterium Yellowstone A-Prime).